Consider the following 153-residue polypeptide: Small ribosomal subunit protein uS11 (153 aa).

Belongs to the universal ribosomal protein uS11 family.

This chain is Small ribosomal subunit protein uS11 (RPS14), found in Chlamydomonas reinhardtii (Chlamydomonas smithii).